The chain runs to 35 residues: MSDIN-like toxin proprotein 8 (35 aa).

A propeptide spanning residues 1 to 10 (MSDINATRLP) is cleaved from the precursor. Residues 11–18 (FVFVASPP) constitute a cross-link (cyclopeptide (Phe-Pro)). Positions 19 to 35 (CVGDDIAMVLTRGENLC) are excised as a propeptide.

This sequence belongs to the MSDIN fungal toxin family. Post-translationally, processed by the macrocyclase-peptidase enzyme POPB to yield a toxic cyclic octapeptide. POPB first removes 10 residues from the N-terminus. Conformational trapping of the remaining peptide forces the enzyme to release this intermediate rather than proceed to macrocyclization. The enzyme rebinds the remaining peptide in a different conformation and catalyzes macrocyclization of the N-terminal 8 residues. As to expression, expressed in basidiocarps.

In terms of biological role, probable toxin that belongs to the MSDIN-like toxin family responsible for a large number of food poisoning cases and deaths. This is MSDIN-like toxin proprotein 8 from Amanita exitialis (Guangzhou destroying angel).